Here is a 425-residue protein sequence, read N- to C-terminus: tRNA(Ile)-lysidine synthase (425 aa).

27–32 contacts ATP; it reads SGGLDS.

The protein belongs to the tRNA(Ile)-lysidine synthase family.

It localises to the cytoplasm. The enzyme catalyses cytidine(34) in tRNA(Ile2) + L-lysine + ATP = lysidine(34) in tRNA(Ile2) + AMP + diphosphate + H(+). Its function is as follows. Ligates lysine onto the cytidine present at position 34 of the AUA codon-specific tRNA(Ile) that contains the anticodon CAU, in an ATP-dependent manner. Cytidine is converted to lysidine, thus changing the amino acid specificity of the tRNA from methionine to isoleucine. This chain is tRNA(Ile)-lysidine synthase, found in Streptococcus pneumoniae serotype 19F (strain G54).